An 817-amino-acid polypeptide reads, in one-letter code: Protein EFR3 homolog B (817 aa).

3 positions are modified to phosphoserine: S212, S214, and S216.

Belongs to the EFR3 family. In terms of assembly, component of a phosphatidylinositol 4-kinase (PI4K) complex, composed of PI4KA, EFR3 (EFR3A or EFR3B), TTC7 (TTC7A or TTC7B) and HYCC (HYCC1 or HYCC2). In terms of processing, palmitoylated at its N-terminus, anchoring the protein to the plasma membrane.

The protein resides in the cell membrane. It is found in the cytoplasm. The protein localises to the cytosol. Its function is as follows. Component of a complex required to localize phosphatidylinositol 4-kinase (PI4K) to the plasma membrane. The complex acts as a regulator of phosphatidylinositol 4-phosphate (PtdIns(4)P) synthesis. In the complex, EFR3B probably acts as the membrane-anchoring component. Also involved in responsiveness to G-protein-coupled receptors; it is however unclear whether this role is direct or indirect. The protein is Protein EFR3 homolog B of Homo sapiens (Human).